The primary structure comprises 712 residues: Polyribonucleotide nucleotidyltransferase (712 aa).

The Mg(2+) site is built by aspartate 487 and aspartate 493. One can recognise a KH domain in the interval 554 to 613; it reads PRIHTMKISVEKIKDVIGKGGAVIRQLTEETGTTIEIEDDGTIKIAATDGDQAKEAIRRI. Residues 623 to 691 form the S1 motif domain; sequence GVIYTGKVAR…RQGRVRLSMK (69 aa).

The protein belongs to the polyribonucleotide nucleotidyltransferase family. As to quaternary structure, component of the RNA degradosome, which is a multiprotein complex involved in RNA processing and mRNA degradation. Requires Mg(2+) as cofactor.

It is found in the cytoplasm. The catalysed reaction is RNA(n+1) + phosphate = RNA(n) + a ribonucleoside 5'-diphosphate. Involved in mRNA degradation. Catalyzes the phosphorolysis of single-stranded polyribonucleotides processively in the 3'- to 5'-direction. In Vibrio cholerae serotype O1 (strain ATCC 39541 / Classical Ogawa 395 / O395), this protein is Polyribonucleotide nucleotidyltransferase.